Consider the following 372-residue polypeptide: DNA double-strand break repair protein Mre11 (372 aa).

The Mn(2+) site is built by D8, H10, D49, and N84. H85 (proton donor) is an active-site residue. Positions 161, 190, and 192 each coordinate Mn(2+).

The protein belongs to the MRE11/RAD32 family. Homodimer. Forms a heterotetramer composed of two Mre11 subunits and two Rad50 subunits. Requires Mn(2+) as cofactor.

Nuclease activity is regulated by Rad50. Its function is as follows. Part of the Rad50/Mre11 complex, which is involved in the early steps of DNA double-strand break (DSB) repair. The complex may facilitate opening of the processed DNA ends to aid in the recruitment of HerA and NurA. Mre11 binds to DSB ends and has both double-stranded 3'-5' exonuclease activity and single-stranded endonuclease activity. This chain is DNA double-strand break repair protein Mre11, found in Methanococcus maripaludis (strain DSM 14266 / JCM 13030 / NBRC 101832 / S2 / LL).